Reading from the N-terminus, the 1578-residue chain is FERM and PDZ domain-containing protein 1 (1578 aa).

Residues 57–135 (TVKIDKDTLL…SLSITVVRCT (79 aa)) form the PDZ domain. An FERM domain is found at 181–496 (NVLKLYLENG…GYYRLLVDPV (316 aa)). Disordered stretches follow at residues 555 to 616 (KEEQ…EEDD), 720 to 743 (SDSS…QGWT), and 759 to 831 (PLAF…VKKY). Residues 720-729 (SDSSESTASR) are compositionally biased toward polar residues. A compositionally biased stretch (low complexity) spans 730-742 (QGGAPPAWGQQGW). A compositionally biased stretch (polar residues) spans 793-811 (AEPSATSLQNKASTSSPEN). A compositionally biased stretch (basic residues) spans 822–831 (PSRRGGVKKY). Residues 924-931 (EPETMETK) are important for interaction with GPSM2. Disordered regions lie at residues 950 to 1030 (PNNK…LASN), 1070 to 1194 (KYTE…QGCQ), and 1347 to 1374 (PQPE…SAGS). A compositionally biased stretch (polar residues) spans 968–986 (TPHCSNPGSSGPDTAQARP). A compositionally biased stretch (basic and acidic residues) spans 1100–1117 (TKEEPQGQLSLERDREVT). A compositionally biased stretch (polar residues) spans 1139-1150 (DVSNNVSQTLDI).

In terms of assembly, interacts with GPSM1. Interacts with GPSM2 (via TPR repeat region).

It is found in the cytoplasm. It localises to the cytosol. Its subcellular location is the cell membrane. Functionally, stabilizes membrane-bound GPSM1, and thereby promotes its interaction with GNAI1. This is FERM and PDZ domain-containing protein 1 (FRMPD1) from Homo sapiens (Human).